The sequence spans 293 residues: N(1)-aminopropylagmatine ureohydrolase (293 aa).

Mn(2+)-binding residues include histidine 105, aspartate 128, histidine 130, aspartate 132, aspartate 210, and aspartate 212.

It belongs to the arginase family. The cofactor is Mn(2+).

It is found in the cytoplasm. The enzyme catalyses N(1)-(3-aminopropyl)agmatine + H2O = urea + spermidine. Its pathway is amine and polyamine biosynthesis; spermidine biosynthesis. Functionally, involved in the biosynthesis of polyamines which are thought to support the growth of thermophilic microorganisms under high-temperature conditions. It seems that long-chain and branched-chain of polyamines effectively stabilize DNA and RNA, respectively. Catalyzes the decarboxylation of N1-(3-aminopropyl)agmatine to yield spermidine and urea. It cannot use agmatine as substrate. The chain is N(1)-aminopropylagmatine ureohydrolase from Thermus thermophilus (strain ATCC 27634 / DSM 579 / HB8).